The primary structure comprises 358 residues: MKPFPRAEISSSALQNNLAVLRQQASRSQVMAVVKANGYGHGLLNVANCLHTADGFGLARLEEALELRAGGVKARLLLLEGFFRSTDLPLLVAHDIDTVVHHESQIEMLEQATLSKPVTVWLKVDSGMHRLGVTPEQFAQVYARLTACDNVAKPIHLMTHFACADEPENNYTQVQMQTFNQLTADLPGFRTLANSAGALYWPKSQGDWIRPGIALYGVSPVTGDCGANHGLIPAMNLVSRLIAVRDHKAGQPVGYGCYWTAKQDTRLGVVAIGYGDGYPRNAPEGTPVWVNGRRVPIVGRVSMDMLTVDLGADAADQVGDEALLWGAALPVEEVAEHIGTIAYELVTKLTPRVAVCLA.

The active-site Proton acceptor; specific for D-alanine is the lysine 35. Lysine 35 is subject to N6-(pyridoxal phosphate)lysine. Arginine 130 is a substrate binding site. Residue tyrosine 255 is the Proton acceptor; specific for L-alanine of the active site. A substrate-binding site is contributed by methionine 303.

It belongs to the alanine racemase family. Pyridoxal 5'-phosphate is required as a cofactor.

The catalysed reaction is L-alanine = D-alanine. It functions in the pathway amino-acid biosynthesis; D-alanine biosynthesis; D-alanine from L-alanine: step 1/1. Functionally, catalyzes the interconversion of L-alanine and D-alanine. May also act on other amino acids. The polypeptide is Alanine racemase (alr) (Shewanella sp. (strain MR-7)).